The following is a 107-amino-acid chain: U1-lycotoxin-Ls1e (107 aa).

A signal peptide spans 1–20 (MMKVLVVFALLVTLISYSSS). Residues 21–41 (EGIDDLEADELLSLMANEQTR) constitute a propeptide that is removed on maturation. 4 cysteine pairs are disulfide-bonded: Cys44–Cys59, Cys51–Cys68, Cys58–Cys86, and Cys70–Cys84.

Belongs to the neurotoxin 19 (CSTX) family. 04 (U1-Lctx) subfamily. Expressed by the venom gland.

Its subcellular location is the secreted. The polypeptide is U1-lycotoxin-Ls1e (Lycosa singoriensis (Wolf spider)).